We begin with the raw amino-acid sequence, 842 residues long: Elongation factor 2 (842 aa).

Residues 17 to 253 enclose the tr-type G domain; sequence TNVRNMSVIA…LWGDSYFNPK (237 aa). Residues 26 to 33, 158 to 161, and 213 to 215 contribute to the GTP site; these read AHVDHGKS, NKVD, and SGL. Histidine 699 is subject to Diphthamide.

Belongs to the TRAFAC class translation factor GTPase superfamily. Classic translation factor GTPase family. EF-G/EF-2 subfamily.

The protein localises to the cytoplasm. It carries out the reaction GTP + H2O = GDP + phosphate + H(+). Functionally, catalyzes the GTP-dependent ribosomal translocation step during translation elongation. During this step, the ribosome changes from the pre-translocational (PRE) to the post-translocational (POST) state as the newly formed A-site-bound peptidyl-tRNA and P-site-bound deacylated tRNA move to the P and E sites, respectively. Catalyzes the coordinated movement of the two tRNA molecules, the mRNA and conformational changes in the ribosome. This Debaryomyces hansenii (strain ATCC 36239 / CBS 767 / BCRC 21394 / JCM 1990 / NBRC 0083 / IGC 2968) (Yeast) protein is Elongation factor 2 (EFT1).